A 142-amino-acid chain; its full sequence is MTNGKYAARKLKKDRQQRRWSDSEYARRERGLGKKSDPLEGAPQGRGIVLEKVGIEAKQPNSAIRKCVRVQLIKNGKQVTAFCPGDGAISFIDEHDEVTIAGIGGAKGRAMGDLSGVNYKVEKVNGVSLIELVRGNAEKPVR.

A disordered region spans residues 1–44 (MTNGKYAARKLKKDRQQRRWSDSEYARRERGLGKKSDPLEGAPQ). A compositionally biased stretch (basic residues) spans 7-16 (AARKLKKDRQ). Residues 17–38 (QRRWSDSEYARRERGLGKKSDP) show a composition bias toward basic and acidic residues.

Belongs to the universal ribosomal protein uS12 family. Part of the 30S ribosomal subunit.

Functionally, with S4 and S5 plays an important role in translational accuracy. Located at the interface of the 30S and 50S subunits. The sequence is that of Small ribosomal subunit protein uS12 from Halobacterium salinarum (strain ATCC 29341 / DSM 671 / R1).